The sequence spans 177 residues: ATP synthase subunit delta (177 aa).

The protein belongs to the ATPase delta chain family. As to quaternary structure, F-type ATPases have 2 components, F(1) - the catalytic core - and F(0) - the membrane proton channel. F(1) has five subunits: alpha(3), beta(3), gamma(1), delta(1), epsilon(1). F(0) has three main subunits: a(1), b(2) and c(10-14). The alpha and beta chains form an alternating ring which encloses part of the gamma chain. F(1) is attached to F(0) by a central stalk formed by the gamma and epsilon chains, while a peripheral stalk is formed by the delta and b chains.

It localises to the cell inner membrane. F(1)F(0) ATP synthase produces ATP from ADP in the presence of a proton or sodium gradient. F-type ATPases consist of two structural domains, F(1) containing the extramembraneous catalytic core and F(0) containing the membrane proton channel, linked together by a central stalk and a peripheral stalk. During catalysis, ATP synthesis in the catalytic domain of F(1) is coupled via a rotary mechanism of the central stalk subunits to proton translocation. Its function is as follows. This protein is part of the stalk that links CF(0) to CF(1). It either transmits conformational changes from CF(0) to CF(1) or is implicated in proton conduction. The chain is ATP synthase subunit delta from Pasteurella multocida (strain Pm70).